Consider the following 182-residue polypeptide: uncharacterized protein (182 aa).

The Macro domain occupies 1 to 170 (MIVKIIKGDI…IFVNIFEREL (170 aa)).

This is an uncharacterized protein from Sulfurisphaera tokodaii (strain DSM 16993 / JCM 10545 / NBRC 100140 / 7) (Sulfolobus tokodaii).